The sequence spans 450 residues: tRNA modification GTPase MnmE (450 aa).

(6S)-5-formyl-5,6,7,8-tetrahydrofolate is bound by residues Lys21, Glu78, and Lys117. Residues 213–376 (GHALSIIGKP…LSQKISAFFP (164 aa)) enclose the TrmE-type G domain. Residue Asn223 coordinates K(+). GTP-binding positions include 223 to 228 (NAGKSS), 242 to 248 (SDIKGTT), and 267 to 270 (DTAG). Ser227 lines the Mg(2+) pocket. Ser242, Ile244, and Thr247 together coordinate K(+). Thr248 is a Mg(2+) binding site. A (6S)-5-formyl-5,6,7,8-tetrahydrofolate-binding site is contributed by Lys450.

Belongs to the TRAFAC class TrmE-Era-EngA-EngB-Septin-like GTPase superfamily. TrmE GTPase family. Homodimer. Heterotetramer of two MnmE and two MnmG subunits. K(+) serves as cofactor.

The protein localises to the cytoplasm. Exhibits a very high intrinsic GTPase hydrolysis rate. Involved in the addition of a carboxymethylaminomethyl (cmnm) group at the wobble position (U34) of certain tRNAs, forming tRNA-cmnm(5)s(2)U34. The chain is tRNA modification GTPase MnmE from Helicobacter acinonychis (strain Sheeba).